We begin with the raw amino-acid sequence, 2602 residues long: Filamin-B (2602 aa).

The tract at residues 1 to 239 is actin-binding; the sequence is MPVTEKDLAE…VMTYLSQFPK (239 aa). Calponin-homology (CH) domains are found at residues 16 to 122 and 139 to 242; these read KIQQ…LHYS and QTPK…KAKL. Threonine 216 carries the phosphothreonine modification. Residues 244-267 form a disordered region; it reads PGAPLKPKLNPKKARAYGRGIEPT. Filamin repeat units follow at residues 249–347, 349–446, 447–543, 544–636, 640–736, 737–839, 840–938, 939–1034, 1035–1127, 1128–1222, 1223–1322, 1323–1415, 1416–1511, 1512–1608, and 1609–1704; these read KPKL…EVNV, KAQG…GVQI, GEAC…EVQV, GPEA…MAFI, TGDY…RVNI, GQGS…RVKV, DPSH…TVGV, AAPL…TVEA, SLPP…KADI, EMPF…WVKV, EPAI…KVAV, TEGC…RVPS, KDVV…KVKV, LPTY…RIRA, and TQTG…TVMA. Threonine 519 bears the Phosphothreonine mark. Lysine 681 bears the N6-acetyllysine mark. Residue serine 730 is modified to Phosphoserine. The span at 837–850 shows a compositional bias: basic and acidic residues; sequence VKVDPSHDASKVKA. A disordered region spans residues 837-862; sequence VKVDPSHDASKVKAEGPGLSKAGVEN. Serine 886, serine 932, serine 983, and serine 1028 each carry phosphoserine. Position 1307 is a phosphothreonine (threonine 1307). Serine 1316 is subject to Phosphoserine. Phosphoserine is present on residues serine 1433, serine 1505, and serine 1602. The tract at residues 1705-1728 is hinge 1; that stretch reads TDGEVTAMEEAPVNACPPGFRPWV. Filamin repeat units lie at residues 1729 to 1813, 1816 to 1908, 1919 to 1994, 1997 to 2089, 2091 to 2185, 2188 to 2280, 2282 to 2375, and 2379 to 2471; these read TEEA…SPLQ, VNYP…TAKI, KLGS…SIMV, SEIG…TVKI, GEGR…QFTV, LGEG…LVPV, APSD…KVRV, and GQAG…KAKV. N6-acetyllysine is present on lysine 1780. Serine 2083 and serine 2113 each carry phosphoserine. Serine 2369 and serine 2465 each carry phosphoserine. Lysine 2468 is covalently cross-linked (Glycyl lysine isopeptide (Lys-Gly) (interchain with G-Cter in ISG15)). Residues 2472-2506 form a hinge 2 region; that stretch reads TGQRLVSPGSANETSSILVESVTRSSTETCYSAIP. The segment at 2472 to 2602 is self-association site, tail; that stretch reads TGQRLVSPGS…PGSPFHVTVP (131 aa). Serine 2478, serine 2481, and serine 2492 each carry phosphoserine. Residues 2507–2601 form a Filamin 24 repeat; that stretch reads KSSSDASKVT…IPGSPFHVTV (95 aa). N6-succinyllysine occurs at positions 2518 and 2524. Lysine 2576 bears the N6-acetyllysine mark.

It belongs to the filamin family. As to quaternary structure, homodimer. Interacts with FLNA, FLNC, INPPL1, ITGB1A, ITGB1D, ITGB3, ITGB6, MYOT, MYOZ1, PSEN1 and PSEN2. Interacts with MICALL2. Interacts with RFLNA and RFLNB. Interacts with ASB2 isoform 1; the interaction targets FLNB for proteasomal degradation. Post-translationally, ISGylation prevents ability to interact with the upstream activators of the JNK cascade and inhibits IFNA-induced JNK signaling. Ubiquitination by a SCF-like complex containing ASB2 isoform 1 leads to proteasomal degradation which promotes muscle differentiation. In terms of tissue distribution, expressed in hippocampus, cortex, cerebellar Purkinje cells and granule cell layers.

The protein localises to the cytoplasm. It is found in the cell cortex. Its subcellular location is the cytoskeleton. It localises to the stress fiber. The protein resides in the myofibril. The protein localises to the sarcomere. It is found in the z line. Connects cell membrane constituents to the actin cytoskeleton. May promote orthogonal branching of actin filaments and links actin filaments to membrane glycoproteins. Anchors various transmembrane proteins to the actin cytoskeleton. The polypeptide is Filamin-B (Flnb) (Mus musculus (Mouse)).